Reading from the N-terminus, the 274-residue chain is Pantothenate synthetase (274 aa).

27–34 contacts ATP; that stretch reads MGALHQGH. The active-site Proton donor is the H34. Q58 lines the (R)-pantoate pocket. Q58 provides a ligand contact to beta-alanine. 144 to 147 contacts ATP; sequence GKKD. Q150 is a (R)-pantoate binding site. ATP-binding positions include I173 and 181–184; that span reads LSSR.

It belongs to the pantothenate synthetase family. As to quaternary structure, homodimer.

Its subcellular location is the cytoplasm. The catalysed reaction is (R)-pantoate + beta-alanine + ATP = (R)-pantothenate + AMP + diphosphate + H(+). Its pathway is cofactor biosynthesis; (R)-pantothenate biosynthesis; (R)-pantothenate from (R)-pantoate and beta-alanine: step 1/1. Its function is as follows. Catalyzes the condensation of pantoate with beta-alanine in an ATP-dependent reaction via a pantoyl-adenylate intermediate. The chain is Pantothenate synthetase from Sulfurovum sp. (strain NBC37-1).